Here is a 481-residue protein sequence, read N- to C-terminus: Acyl-CoA ligase cnsG (481 aa).

The PTS2-type peroxisomal targeting signal motif lies at 3 to 11 (SPQLPPSMK). ATP contacts are provided by residues 124–132 (KSGTTGNPK), 263–268 (NGYGMT), D353, and R368. T268 serves as a coordination point for substrate. CoA is bound by residues 376–378 (GGL) and 446–448 (AIF). K466 is a binding site for ATP.

Belongs to the ATP-dependent AMP-binding enzyme family.

Its pathway is alkaloid biosynthesis. Functionally, acyl-CoA ligase; part of the gene cluster that mediates the biosynthesis of communesins, a prominent class of indole alkaloids with great potential as pharmaceuticals. Communesins are biosynthesized by the coupling of tryptamine and aurantioclavine, two building blocks derived from L-tryptophan. The L-tryptophan decarboxylase cnsB converts L-tryptophan to tryptamine, whereas the tryptophan dimethylallyltransferase cnsF converts L-tryptophan to 4-dimethylallyl tryptophan which is further transformed to aurantioclavine by the aurantioclavine synthase cnsA, probably aided by the catalase cnsD. The cytochrome P450 monooxygenase cnsC catalyzes the heterodimeric coupling between the two different indole moieties, tryptamine and aurantioclavine, to construct vicinal quaternary stereocenters and yield the heptacyclic communesin scaffold. The O-methyltransferase cnsE then methylates the communesin scaffold to produce communesin K, the simplest characterized communesin that contains the heptacyclic core. The dioxygenase cnsJ converts communesin K into communesin I. Acylation to introduce the hexadienyl group at position N16 of communesin I by the acyltransferase cnsK leads to the production of communesin B. The hexadienyl group is produced by the highly reducing polyketide synthase cnsI, before being hydrolytically removed from cnsI by the serine hydrolase cnsH, converted into hexadienyl-CoA by the CoA ligase cnsG, and then transferred to communesin I by cnsK. Surprisingly, cnsK may also be a promiscuous acyltransferase that can tolerate a range of acyl groups, including acetyl-, propionyl-, and butyryl-CoA, which lead to communesins A, G and H respectively. The roles of the alpha-ketoglutarate-dependent dioxygenases cnsM and cnsP have still to be determined. This chain is Acyl-CoA ligase cnsG, found in Penicillium expansum (Blue mold rot fungus).